A 494-amino-acid chain; its full sequence is Alpha-amylase-related protein (494 aa).

Residues Met1 to Ala20 form the signal peptide. Gln21 carries the post-translational modification Pyrrolidone carboxylic acid. An intrachain disulfide couples Cys48 to Cys104. Residues Asn118, Gln169, and Asp178 each contribute to the Ca(2+) site. Cys157 and Cys171 form a disulfide bridge. Arg206 is a binding site for chloride. Residue Asp208 is the Nucleophile of the active site. Ca(2+) is bound at residue His212. Glu245 acts as the Proton donor in catalysis. Chloride is bound by residues Asn308 and Arg343. Cystine bridges form between Cys376/Cys382, Cys418/Cys441, and Cys448/Cys460.

This sequence belongs to the glycosyl hydrolase 13 family. In terms of assembly, monomer. Requires Ca(2+) as cofactor. Chloride serves as cofactor.

It is found in the secreted. It carries out the reaction Endohydrolysis of (1-&gt;4)-alpha-D-glucosidic linkages in polysaccharides containing three or more (1-&gt;4)-alpha-linked D-glucose units.. The polypeptide is Alpha-amylase-related protein (Amyrel) (Drosophila bipectinata (Fruit fly)).